The chain runs to 164 residues: NADH-quinone oxidoreductase subunit I (164 aa).

4Fe-4S ferredoxin-type domains are found at residues leucine 55–glutamate 85 and threonine 95–asparagine 124. [4Fe-4S] cluster contacts are provided by cysteine 65, cysteine 68, cysteine 71, cysteine 75, cysteine 104, cysteine 107, cysteine 110, and cysteine 114.

The protein belongs to the complex I 23 kDa subunit family. NDH-1 is composed of 14 different subunits. Subunits NuoA, H, J, K, L, M, N constitute the membrane sector of the complex. It depends on [4Fe-4S] cluster as a cofactor.

The protein resides in the cell inner membrane. It carries out the reaction a quinone + NADH + 5 H(+)(in) = a quinol + NAD(+) + 4 H(+)(out). Functionally, NDH-1 shuttles electrons from NADH, via FMN and iron-sulfur (Fe-S) centers, to quinones in the respiratory chain. The immediate electron acceptor for the enzyme in this species is believed to be ubiquinone. Couples the redox reaction to proton translocation (for every two electrons transferred, four hydrogen ions are translocated across the cytoplasmic membrane), and thus conserves the redox energy in a proton gradient. In Dinoroseobacter shibae (strain DSM 16493 / NCIMB 14021 / DFL 12), this protein is NADH-quinone oxidoreductase subunit I.